An 859-amino-acid chain; its full sequence is DNA-directed RNA polymerase subunit Rpo1C (859 aa).

The protein belongs to the RNA polymerase beta' chain family. As to quaternary structure, part of the RNA polymerase complex. In terms of processing, this protein undergoes a protein self splicing that involves a post-translational excision of the intervening region (intein) followed by peptide ligation.

It is found in the cytoplasm. The enzyme catalyses RNA(n) + a ribonucleoside 5'-triphosphate = RNA(n+1) + diphosphate. Its function is as follows. DNA-dependent RNA polymerase (RNAP) catalyzes the transcription of DNA into RNA using the four ribonucleoside triphosphates as substrates. Forms part of the jaw domain. This chain is DNA-directed RNA polymerase subunit Rpo1C, found in Methanocaldococcus jannaschii (strain ATCC 43067 / DSM 2661 / JAL-1 / JCM 10045 / NBRC 100440) (Methanococcus jannaschii).